We begin with the raw amino-acid sequence, 170 residues long: Cysteine-rich venom protein VAR4 (170 aa).

The first 22 residues, 1 to 22 (MILLKLYLTLAAILCQSRGTTS), serve as a signal peptide directing secretion. In terms of domain architecture, SCP spans 41–169 (NKHNDLRRTV…PLKYFLVCQY (129 aa)). 3 cysteine pairs are disulfide-bonded: Cys77–Cys156, Cys95–Cys170, and Cys151–Cys167.

It belongs to the CRISP family. Contains 8 disulfide bonds. As to expression, expressed by the venom gland.

The protein resides in the secreted. In terms of biological role, blocks ryanodine receptors, and potassium channels. This chain is Cysteine-rich venom protein VAR4, found in Varanus acanthurus (Ridge-tailed monitor).